We begin with the raw amino-acid sequence, 191 residues long: Cytochrome b-245 light chain (191 aa).

Topologically, residues 2–7 (GQIEWA) are cytoplasmic. The chain crosses the membrane as a helical span at residues 8–30 (MWANEQALASGLILITGGIVATA). Residues 31-35 (GQFTQ) are Extracellular-facing. Residues 36–53 (WYLGAYSIAAGVLVCLLE) form a helical membrane-spanning segment. Residues 54–69 (YPRGKRSKGSTMERCG) lie on the Cytoplasmic side of the membrane. Residues 70 to 80 (QKYLTRVVKLF) lie within the membrane without spanning it. The Cytoplasmic portion of the chain corresponds to 81 to 86 (GPLTRN). A helical transmembrane segment spans residues 87–104 (YYIRAFLHLGLAVPAGFL). Position 105 (Leu105) is a topological domain, extracellular. The helical transmembrane segment at 106 to 126 (ATILGTACLAIASGIYLLAAI) threads the bilayer. At 127-191 (RGEQWSPIEP…NPMPVNDEVV (65 aa)) the chain is on the cytoplasmic side. A disordered region spans residues 134 to 191 (IEPKPKERPQIGGTIKQPPSNPPPRPPAEARKKPSEEAAGVPTGGPQENPMPVNDEVV). Thr147 bears the Phosphothreonine mark. Lys149 participates in a covalent cross-link: Glycyl lysine isopeptide (Lys-Gly) (interchain with G-Cter in ubiquitin). The residue at position 168 (Ser168) is a Phosphoserine.

The protein belongs to the p22phox family. Component of the phagocyte NADPH oxidase core complex/cytochrome b558 complex, composed of CYBB (heavy chain (beta)) and CYBA (light chain (alpha)). Component of the phagocyte NADPH oxidase complex composed of an obligatory core heterodimer formed by the membrane proteins CYBA and CYBB and the cytosolic regulatory subunits NCF1/p47-phox, NCF2/p67-phox, NCF4/p40-phox and the small GTPase RAC1 or RAC2. Interacts with NCF1 (via SH3 domain). Interacts with SH3PXD2A. Interacts with DUOX1, DUOX2 and TPO. Interacts with NOX4; this interaction mediates superoxide generation. Interacts with calprotectin (S100A8/9). Interacts with GBP7. Interacts with NOXO1. Forms a heterodimer with NOX3 and is essential for activity and cell membrane localization of NOX3. Interacts with NOX1. Post-translationally, phosphorylation at Thr-147 enhances NADPH oxidase activity by promoting NCF1/p47-phox binding. In terms of processing, ubiquitinated at Lys-149 likely by RNF145.

It is found in the cell membrane. In terms of biological role, subunit of NADPH oxidase complexes that is required for the NADPH oxidase activity that generates, in various cell types, superoxide from molecular oxygen utilizing NADPH as an electron donor. Subunit of the phagocyte NADPH oxidase complex that mediates the transfer of electrons from cytosolic NADPH to O2 to produce the superoxide anion (O2(-)). In the activated complex, electrons are first transferred from NADPH to flavin adenine dinucleotide (FAD) and subsequently transferred via two heme molecules to molecular oxygen, producing superoxide through an outer-sphere reaction. Activation of the NADPH oxidase complex is initiated by the assembly of cytosolic subunits of the NADPH oxidase complex with the core NADPH oxidase complex to form a complex at the plasma membrane or phagosomal membrane. This activation process is initiated by phosphorylation dependent binding of the cytosolic NCF1/p47-phox subunit to the C-terminus of CYBA/p22-phox. Aassociates with NOX3 to form a functional NADPH oxidase constitutively generating superoxide. This Bos taurus (Bovine) protein is Cytochrome b-245 light chain.